The primary structure comprises 417 residues: UDP-N-acetylglucosamine 1-carboxyvinyltransferase (417 aa).

K22 to N23 lines the phosphoenolpyruvate pocket. Residue R92 coordinates UDP-N-acetyl-alpha-D-glucosamine. Residue C116 is the Proton donor of the active site. 2-(S-cysteinyl)pyruvic acid O-phosphothioketal is present on C116. Residues D304 and I326 each coordinate UDP-N-acetyl-alpha-D-glucosamine.

It belongs to the EPSP synthase family. MurA subfamily.

It is found in the cytoplasm. It catalyses the reaction phosphoenolpyruvate + UDP-N-acetyl-alpha-D-glucosamine = UDP-N-acetyl-3-O-(1-carboxyvinyl)-alpha-D-glucosamine + phosphate. It functions in the pathway cell wall biogenesis; peptidoglycan biosynthesis. Its function is as follows. Cell wall formation. Adds enolpyruvyl to UDP-N-acetylglucosamine. The chain is UDP-N-acetylglucosamine 1-carboxyvinyltransferase from Geobacter sulfurreducens (strain ATCC 51573 / DSM 12127 / PCA).